Here is a 61-residue protein sequence, read N- to C-terminus: Large ribosomal subunit protein uL30 (61 aa).

It belongs to the universal ribosomal protein uL30 family. Part of the 50S ribosomal subunit.

In Methylococcus capsulatus (strain ATCC 33009 / NCIMB 11132 / Bath), this protein is Large ribosomal subunit protein uL30.